Here is a 412-residue protein sequence, read N- to C-terminus: MTAKTLEKAPVSLGGFVHPLADSIYSVDELGTTLPASVTIYNDLGGHYEQINAGDGLINGDMSTEKRALDLAYSSTFAQPAGPRNQTFTYMGKFSIDSQYPGNWNPEGVINIVSAGILGMTQPSSASSSPASSVSPSHFSSTLSCTMAQNQADMEHIYSPPPPYSGCGEVYQDPSAFLSTSTCPISYPPPSYSSPKPNADSGLFPIIPDYAGFFQPPCQRDMQSMPDRKPFSCPLDSFKLPPPLTPLNTIRNFTLGGPGPDGPRLPTAYTPQNLPLRPILRPRKYPNRPSKTPVHERPYPCPAEGCDRRFSRSDELTRHIRIHTGHKPFQCRICMRNFSRSDHLTTHIRTHTGEKPFACDFCGRKFARSDERKRHTKIHLRQKERKSSSSSTGVSSSERGVATSICSSSSNQ.

Positions 269–299 (YTPQNLPLRPILRPRKYPNRPSKTPVHERPY) are disordered. 3 consecutive C2H2-type zinc fingers follow at residues 299-323 (YPCP…IRIH), 329-351 (FQCR…IRTH), and 357-379 (FACD…TKIH). A disordered region spans residues 371 to 412 (ERKRHTKIHLRQKERKSSSSSTGVSSSERGVATSICSSSSNQ). Basic residues predominate over residues 374–384 (RHTKIHLRQKE). The segment covering 388–401 (SSSSTGVSSSERGV) has biased composition (low complexity).

It belongs to the EGR C2H2-type zinc-finger protein family.

Its subcellular location is the nucleus. Its function is as follows. Sequence-specific DNA-binding transcription factor. Binds to two specific DNA sites located in the promoter region of HOXA4. The sequence is that of Early growth response protein 2b (egr2b) from Danio rerio (Zebrafish).